Consider the following 379-residue polypeptide: MTNIRKNHPLLKIANNSLIDLPTPPNISSLWNFGSLLGACLIIQVITGLFLAMHYTADTTTAFSSVTHICRDVSYGWMIRYLHANGASMFFLCLFIHVGRGLYYGSFTLLETWNVGIILLFSVMATAFMGYVLPWGQMSFWGATVITNLLSAIPYIGTDLVEWIWGGFSVSKATLTRFFALHFILPFIISAWVMIHLLFLHETGSNNPLGMSSNSDKIPFHPYYTTKDFLGLLLLILLLMTLALFYPDLLGDPDNYTPANPLNTPSHIKPEWYFLFAYAILRSIPNKLGGVVALILSILILMIIPFLQPNKQQTMMFRPLSQFLFWILVADLLTLTWIGGQPVEDPFISIGQTASMLYFSLMIFIMPMTCLIENKMLKW.

4 helical membrane passes run 33–53, 77–98, 113–133, and 178–198; these read FGSL…FLAM, WMIR…FIHV, WNVG…GYVL, and FFAL…IHLL. Heme b contacts are provided by His83 and His97. The heme b site is built by His182 and His196. Position 201 (His201) interacts with a ubiquinone. A run of 4 helical transmembrane segments spans residues 226-246, 288-308, 320-340, and 347-367; these read TKDF…ALFY, LGGV…PFLQ, LSQF…WIGG, and FISI…FIMP.

Belongs to the cytochrome b family. The cytochrome bc1 complex contains 11 subunits: 3 respiratory subunits (MT-CYB, CYC1 and UQCRFS1), 2 core proteins (UQCRC1 and UQCRC2) and 6 low-molecular weight proteins (UQCRH/QCR6, UQCRB/QCR7, UQCRQ/QCR8, UQCR10/QCR9, UQCR11/QCR10 and a cleavage product of UQCRFS1). This cytochrome bc1 complex then forms a dimer. Heme b is required as a cofactor.

The protein localises to the mitochondrion inner membrane. In terms of biological role, component of the ubiquinol-cytochrome c reductase complex (complex III or cytochrome b-c1 complex) that is part of the mitochondrial respiratory chain. The b-c1 complex mediates electron transfer from ubiquinol to cytochrome c. Contributes to the generation of a proton gradient across the mitochondrial membrane that is then used for ATP synthesis. In Lepilemur septentrionalis (Northern sportive lemur), this protein is Cytochrome b (MT-CYB).